The following is a 1093-amino-acid chain: TATA element modulatory factor (1093 aa).

Disordered regions lie at residues 38–80 (WAET…SPKA) and 108–189 (TIQK…DMKV). Over residues 51–70 (SPVSGGWDTSTWGLKSNTEP) the composition is skewed to polar residues. Residues serine 72, serine 77, serine 112, and serine 136 each carry the phosphoserine modification. The segment covering 123–137 (QRPEEEVKSSLHESL) has biased composition (basic and acidic residues). Residues 139–158 (IGQSRTPETTESQVKDSSLC) are compositionally biased toward polar residues. Basic and acidic residues predominate over residues 173–187 (TEGKHEETVNKESDM). Phosphoserine occurs at positions 199 and 217. The segment covering 229–238 (PKEQKHEDRQ) has biased composition (basic and acidic residues). 2 disordered regions span residues 229 to 260 (PKEQ…SDIE) and 266 to 285 (SVIS…SKSS). Positions 246-257 (VSTFSSGTSTTS) are enriched in low complexity. Phosphoserine occurs at positions 328, 330, 333, 338, 344, 413, 542, 925, and 928. Positions 333-342 (SLDSRSVSEI) are interaction with Elongin BC complex. Residues 439-922 (EALSEKEDVC…QETIKEKERK (484 aa)) are a coiled coil. A disordered region spans residues 919 to 939 (KERKPFSVSSTPTMSRSSSIS). The segment covering 925–939 (SVSSTPTMSRSSSIS) has biased composition (low complexity). Residue threonine 929 is modified to Phosphothreonine. Serine 933 bears the Phosphoserine mark. The stretch at 984–1092 (SIIENLQSQL…QIDELLRQSL (109 aa)) forms a coiled coil.

Interacts with TRNP1; may regulate TRNP1 proteasomal degradation. Component of the SNF/SWI transcription factor complexes. Interacts with RAB6A. Interacts with STAT3 and FER. Interacts with TCEB1. Post-translationally, phosphorylated by FER.

Its subcellular location is the cytoplasm. The protein localises to the nucleus. It localises to the golgi apparatus membrane. Potential coactivator of the androgen receptor. Mediates STAT3 degradation. May play critical roles in two RAB6-dependent retrograde transport processes: one from endosomes to the Golgi and the other from the Golgi to the ER. This protein binds the HIV-1 TATA element and inhibits transcriptional activation by the TATA-binding protein (TBP). The protein is TATA element modulatory factor (TMF1) of Homo sapiens (Human).